Reading from the N-terminus, the 140-residue chain is PDZ domain-containing protein 11 (140 aa).

A PDZ domain is found at 47–129; that stretch reads TVVLKKPPGA…ITMRVRYFPY (83 aa).

The protein resides in the cytoplasm. The sequence is that of PDZ domain-containing protein 11 (PDZD11) from Gallus gallus (Chicken).